The following is a 464-amino-acid chain: Siroheme synthase (464 aa).

The precorrin-2 dehydrogenase /sirohydrochlorin ferrochelatase stretch occupies residues 1 to 203; it reads MEFLPLFHNL…GQGAEAERLL (203 aa). Residues 22 to 23 and 43 to 44 each bind NAD(+); these read EI and PE. Serine 128 carries the phosphoserine modification. The uroporphyrinogen-III C-methyltransferase stretch occupies residues 216–464; that stretch reads GEVYLVGAGP…AWFEGAQATV (249 aa). Residue proline 225 participates in S-adenosyl-L-methionine binding. Catalysis depends on aspartate 248, which acts as the Proton acceptor. Lysine 270 serves as the catalytic Proton donor. S-adenosyl-L-methionine-binding positions include 301-303, isoleucine 306, 331-332, methionine 383, and glycine 412; these read GGD and TA.

It in the N-terminal section; belongs to the precorrin-2 dehydrogenase / sirohydrochlorin ferrochelatase family. This sequence in the C-terminal section; belongs to the precorrin methyltransferase family.

It carries out the reaction uroporphyrinogen III + 2 S-adenosyl-L-methionine = precorrin-2 + 2 S-adenosyl-L-homocysteine + H(+). It catalyses the reaction precorrin-2 + NAD(+) = sirohydrochlorin + NADH + 2 H(+). The enzyme catalyses siroheme + 2 H(+) = sirohydrochlorin + Fe(2+). The protein operates within cofactor biosynthesis; adenosylcobalamin biosynthesis; precorrin-2 from uroporphyrinogen III: step 1/1. It functions in the pathway cofactor biosynthesis; adenosylcobalamin biosynthesis; sirohydrochlorin from precorrin-2: step 1/1. Its pathway is porphyrin-containing compound metabolism; siroheme biosynthesis; precorrin-2 from uroporphyrinogen III: step 1/1. It participates in porphyrin-containing compound metabolism; siroheme biosynthesis; siroheme from sirohydrochlorin: step 1/1. The protein operates within porphyrin-containing compound metabolism; siroheme biosynthesis; sirohydrochlorin from precorrin-2: step 1/1. Multifunctional enzyme that catalyzes the SAM-dependent methylations of uroporphyrinogen III at position C-2 and C-7 to form precorrin-2 via precorrin-1. Then it catalyzes the NAD-dependent ring dehydrogenation of precorrin-2 to yield sirohydrochlorin. Finally, it catalyzes the ferrochelation of sirohydrochlorin to yield siroheme. The protein is Siroheme synthase of Pseudomonas savastanoi pv. phaseolicola (strain 1448A / Race 6) (Pseudomonas syringae pv. phaseolicola (strain 1448A / Race 6)).